The chain runs to 182 residues: ADP-ribosylation factor-like protein 3 (182 aa).

Residue G2 is the site of N-myristoyl glycine attachment. At S5 the chain carries Phosphoserine. GTP is bound by residues 24 to 31, T48, 67 to 71, G70, 126 to 129, and 159 to 161; these read GLDNAGKT, DIGGQ, NKQD, and SAL. The Mg(2+) site is built by T31 and T48.

The protein belongs to the small GTPase superfamily. Arf family. As to quaternary structure, found in a complex with ARL3, RP2 and UNC119 (or UNC119B); RP2 induces hydrolysis of GTP ARL3 in the complex, leading to the release of UNC119 (or UNC119B). Interacts with RP2; interaction is direct and stimulated with the activated GTP-bound form of ARL3. Interacts with SYS1. Interacts with ARL2BP; the GTP-bound form interacts with ARL2BP. Microtubule-associated protein. Does not interact with TBCC. Interacts with RP2. Interacts with PDE6D; the interaction occurs specifically with the GTP-bound form of ARL3. Interacts with GGA1; the interaction recruits PKD1:PKD2 complex to trans-Golgi network and is required for ciliary targeting of PKD1:PKD2 complex. Interacts with DNAAF9.

It is found in the golgi apparatus membrane. The protein resides in the cytoplasm. The protein localises to the cytoskeleton. Its subcellular location is the spindle. It localises to the nucleus. It is found in the microtubule organizing center. The protein resides in the centrosome. The protein localises to the cell projection. Its subcellular location is the cilium. Functionally, small GTP-binding protein which cycles between an inactive GDP-bound and an active GTP-bound form, and the rate of cycling is regulated by guanine nucleotide exchange factors (GEF) and GTPase-activating proteins (GAP). Required for normal cytokinesis and cilia signaling. Required for targeting proteins to the cilium, including myristoylated NPHP3 and prenylated INPP5E. Targets NPHP3 to the ciliary membrane by releasing myristoylated NPHP3 from UNC119B cargo adapter into the cilium. Requires assistance from GTPase-activating proteins (GAPs) like RP2 and PDE6D, in order to cycle between inactive GDP-bound and active GTP-bound forms. Required for PKD1:PKD2 complex targeting from the trans-Golgi network to the cilium. This chain is ADP-ribosylation factor-like protein 3, found in Mus musculus (Mouse).